The primary structure comprises 378 residues: Forkhead box protein I1 (378 aa).

2 disordered regions span residues 1 to 26 (MSSF…QEPP) and 208 to 278 (DNGN…APCL). Positions 123-217 (RPPYSYSALI…DNGNFRRKRK (95 aa)) form a DNA-binding region, fork-head. Residues 236–248 (SSLPVDSPKTTEP) are compositionally biased toward polar residues.

In terms of tissue distribution, expressed in kidney.

It localises to the nucleus. Functionally, transcriptional activator required for the development of normal hearing, sense of balance and kidney function. Required for the expression of SLC26A4/PDS, JAG1 and COCH in a subset of epithelial cells and the development of the endolymphatic system in the inner ear. Also required for the expression of SLC4A1/AE1, SLC4A9/AE4, ATP6V1B1 and the differentiation of intercalated cells in the epithelium of distal renal tubules. This Homo sapiens (Human) protein is Forkhead box protein I1 (FOXI1).